The chain runs to 1335 residues: Aldehyde oxidase 2 (1335 aa).

One can recognise a 2Fe-2S ferredoxin-type domain in the interval 8 to 95 (DVLVFFVNGR…GAAVTTVEGV (88 aa)). [2Fe-2S] cluster is bound by residues Cys-47, Cys-52, Cys-55, and Cys-77. A Mo-molybdopterin-binding site is contributed by Gln-116. [2Fe-2S] cluster contacts are provided by Cys-117, Cys-120, Cys-152, and Cys-154. A Mo-molybdopterin-binding site is contributed by Cys-154. One can recognise an FAD-binding PCMH-type domain in the interval 242 to 427 (FRGDRVTWVS…ESVHIPHSQK (186 aa)). Residues 270–277 (LVLGNTAL), Ala-351, Ser-360, His-364, Asp-373, and Leu-417 each bind FAD. Residues 821-822 (GF), 1103-1106 (ASVG), Gln-1218, and Leu-1285 each bind Mo-molybdopterin. The Proton acceptor; for azaheterocycle hydroxylase activity role is filled by Glu-1287.

This sequence belongs to the xanthine dehydrogenase family. In terms of assembly, homodimer. [2Fe-2S] cluster is required as a cofactor. FAD serves as cofactor. It depends on Mo-molybdopterin as a cofactor. In terms of tissue distribution, detected in kidney, Harderian gland and olfactory mucosa.

Its subcellular location is the cytoplasm. It carries out the reaction an aldehyde + O2 + H2O = a carboxylate + H2O2 + H(+). Its function is as follows. Oxidase with broad substrate specificity, oxidizing aromatic azaheterocycles, such as phthalazine, as well as aldehydes, such as benzaldehyde and retinal. This chain is Aldehyde oxidase 2 (AOX2), found in Cavia porcellus (Guinea pig).